Consider the following 279-residue polypeptide: Four and a half LIM domains protein 2 (279 aa).

Residues 7–31 form a C4-type zinc finger; the sequence is CHHCEDSLFGRKYVLREEQPYCVAC. LIM zinc-binding domains follow at residues 40–92, 101–153, and 162–212; these read CEEC…CTDC, CQEC…CVPC, and CVQC…CLGC. Lys78 is covalently cross-linked (Glycyl lysine isopeptide (Lys-Gly) (interchain with G-Cter in SUMO2)). Glycyl lysine isopeptide (Lys-Gly) (interchain with G-Cter in SUMO2) cross-links involve residues Lys167 and Lys220. The region spanning 221-275 is the LIM zinc-binding 4 domain; it reads CAGCANPISGLGGTKYISFEERQWHNDCFNCKKCSLSLVGRGFLTERDDILCPDC. Ser238 carries the post-translational modification Phosphoserine.

In terms of assembly, interacts with ZNF638 and TTN/titin. Interacts with E4F1. Interacts with GRB7. Interacts with SIRT1 and FOXO1. Interacts with CEFIP and calcineurin. Interacts with FOXK1.

It localises to the cytoplasm. Its subcellular location is the nucleus. The protein resides in the myofibril. The protein localises to the sarcomere. It is found in the z line. Its function is as follows. May function as a molecular transmitter linking various signaling pathways to transcriptional regulation. Negatively regulates the transcriptional repressor E4F1 and may function in cell growth. Inhibits the transcriptional activity of FOXO1 and its apoptotic function by enhancing the interaction of FOXO1 with SIRT1 and FOXO1 deacetylation. Negatively regulates the calcineurin/NFAT signaling pathway in cardiomyocytes. The chain is Four and a half LIM domains protein 2 (FHL2) from Bos taurus (Bovine).